The sequence spans 408 residues: Phosphopentomutase (408 aa).

Aspartate 10, aspartate 303, histidine 308, aspartate 344, histidine 345, and histidine 356 together coordinate Mn(2+).

It belongs to the phosphopentomutase family. Requires Mn(2+) as cofactor.

The protein localises to the cytoplasm. The enzyme catalyses 2-deoxy-alpha-D-ribose 1-phosphate = 2-deoxy-D-ribose 5-phosphate. The catalysed reaction is alpha-D-ribose 1-phosphate = D-ribose 5-phosphate. Its pathway is carbohydrate degradation; 2-deoxy-D-ribose 1-phosphate degradation; D-glyceraldehyde 3-phosphate and acetaldehyde from 2-deoxy-alpha-D-ribose 1-phosphate: step 1/2. Isomerase that catalyzes the conversion of deoxy-ribose 1-phosphate (dRib-1-P) and ribose 1-phosphate (Rib-1-P) to deoxy-ribose 5-phosphate (dRib-5-P) and ribose 5-phosphate (Rib-5-P), respectively. This Tolumonas auensis (strain DSM 9187 / NBRC 110442 / TA 4) protein is Phosphopentomutase.